The primary structure comprises 199 residues: Recombination protein RecR (199 aa).

A C4-type zinc finger spans residues 58 to 73 (CSRCFYFTEEDPCPLC). In terms of domain architecture, Toprim spans 81–176 (QLICVVEEPQ…KVTRLAHGIP (96 aa)).

The protein belongs to the RecR family.

In terms of biological role, may play a role in DNA repair. It seems to be involved in an RecBC-independent recombinational process of DNA repair. It may act with RecF and RecO. The chain is Recombination protein RecR from Syntrophotalea carbinolica (strain DSM 2380 / NBRC 103641 / GraBd1) (Pelobacter carbinolicus).